Consider the following 263-residue polypeptide: Ubiquitin domain-containing protein 7SL RNA2 (263 aa).

One can recognise a Ubiquitin-like 1 domain in the interval 1–53 (MNVDIDTETGSSFSITIDFGETVLQIKEKIEKSQGIPVSKQILYLDGKALEDD). A disordered region spans residues 74-93 (ADPNQSNEQTEQSKQIDDKK). The segment covering 76 to 86 (PNQSNEQTEQS) has biased composition (polar residues). One can recognise a Ubiquitin-like 2 domain in the interval 184–263 (FTVHVKPYQE…GDTIELIREK (80 aa)).

The protein belongs to the ubiquitin family. Expressed in seedlings, roots, stems, rosettes and flowers (at protein level).

The protein resides in the nucleus. In terms of biological role, controls phase transition from the vegetative to the reproductive state. Involved in the maintenance of the shoot apical meristem (SAM) thus preventing inflorescence meristem (IM) formation and subsequent inflorescence stem development during flowering. Regulates leaf and organ morphology. This chain is Ubiquitin domain-containing protein 7SL RNA2, found in Arabidopsis thaliana (Mouse-ear cress).